We begin with the raw amino-acid sequence, 198 residues long: MSASRFIKCVTVGDGAVGKTCLLISYTSNTFPTDYVPTVFDNFSANVIVDGNTINLGLWDTAGQEDYNRLRPLSYRGADVFLLAFSLVSKASYENVSKKWVPELRHYAPGVPIILVGTKLDLRDDKQFFAEHPGAVPISTAQGEELKKLIGAPAYIECSAKTQQNVKAVFDAAIKVVLQPPKNKKKKKRKSQKGCSIL.

GTP-binding positions include 13–21, 31–38, 60–64, and 118–121; these read GDGAVGKTC, FPTDYVPT, DTAGQ, and TKLD. An Effector region motif is present at residues 35-43; that stretch reads YVPTVFDNF. C158 carries S-palmitoyl cysteine lipidation. C195 is modified (cysteine methyl ester). A lipid anchor (S-geranylgeranyl cysteine) is attached at C195. A propeptide spans 196–198 (removed in mature form); it reads SIL.

The protein belongs to the small GTPase superfamily. Rho family. In terms of assembly, interacts with Rho GDP-dissociation inhibitor 1 and ICR1. Binds to SPK1 when in the inactive GDP-bound form. Ubiquitous. Preferentially expressed at the tip of root hairs.

Its subcellular location is the cytoplasm. The protein resides in the cell membrane. Functionally, inactive GDP-bound Rho GTPases reside in the cytosol, are found in a complex with Rho GDP-dissociation inhibitors (Rho GDIs), and are released from the GDI protein in order to translocate to membranes upon activation. Involved in cell polarity control during the actin-dependent tip growth of root hairs, thus regulating root hair length and root hair initiation. Contributes, in a SPK1-dependent manner, to the prevention of cortical microtubules organization into parallel arrays oriented perpendicular to the axis of cell elongation to limit anisotropic cell growth during petal development. SPK1-dependent activation is required for auxin-mediated inhibition of PIN2 internalization during gravitropic responses. This Arabidopsis thaliana (Mouse-ear cress) protein is Rac-like GTP-binding protein ARAC3.